A 522-amino-acid chain; its full sequence is Signal transduction histidine-protein kinase/phosphatase MprB (522 aa).

The Cytoplasmic segment spans residues 1-30 (MIRLYRPQRPPLRAPLRATPSLSLRWRVML). Residues 31 to 51 (LAMSMVAMVVVLMAFAVYAVI) traverse the membrane as a helical segment. The Extracellular segment spans residues 52 to 167 (SAALYSDIDN…PTEAVMNKLR (116 aa)). The chain crosses the membrane as a helical span at residues 168 to 188 (WVLLIVGGVGVAVAAVAGGMV). At 189-522 (TRAGLRPVAR…SVDSQSARAR (334 aa)) the chain is on the cytoplasmic side. The region spanning 190-242 (RAGLRPVARLTEAAERVARTDDLRPIPVFGSDELARLTESFNLMLRALAESRE) is the HAMP domain. The Histidine kinase domain maps to 250–470 (DAGHELRTPL…SFYVLLPGRS (221 aa)). Histidine 253 carries the post-translational modification Phosphohistidine; by autocatalysis. The interval 467-522 (PGRSLPPAGHSTPAGESETDQAEAATDPAVPVAGDTANSRESANVISVDSQSARAR) is disordered. Positions 502–522 (TANSRESANVISVDSQSARAR) are enriched in polar residues.

Mg(2+) serves as cofactor. Mn(2+) is required as a cofactor. Post-translationally, autophosphorylated.

The protein resides in the cell membrane. It carries out the reaction ATP + protein L-histidine = ADP + protein N-phospho-L-histidine.. In terms of biological role, member of the two-component regulatory system MprB/MprA which contributes to maintaining a balance among several systems involved in stress resistance and is required for establishment and maintenance of persistent infection in the host. In response to environmental signals MprB acts both as a membrane-associated protein kinase that undergoes autophosphorylation and subsequently transfers the phosphate to MprA, and a protein phosphatase that dephosphorylates phospho-MprA. The sequence is that of Signal transduction histidine-protein kinase/phosphatase MprB (mprB) from Mycolicibacterium paratuberculosis (strain ATCC BAA-968 / K-10) (Mycobacterium paratuberculosis).